Here is a 469-residue protein sequence, read N- to C-terminus: DNA polymerase delta subunit 2 (469 aa).

Met1 is subject to N-acetylmethionine. Residue Ser257 is modified to Phosphoserine.

The protein belongs to the DNA polymerase delta/II small subunit family. As to quaternary structure, component of both the DNA polymerase delta and DNA polymerase zeta complexes. Component of the tetrameric DNA polymerase delta complex (Pol-delta4), which consists of POLD1/p125, POLD2/p50, POLD3/p66/p68 and POLD4/p12, with POLD1 bearing DNA polymerase and 3' to 5' proofreading exonuclease activities. Within Pol-delta4, directly interacts with POLD1, POLD3 and POLD4. Following stress caused by DNA damaging agents or by replication stress, POLD4 is degraded and Pol-delta4 is converted into a trimeric form of the complex (Pol-delta3), which consists of POLD1, POLD2 and POLD3. Pol-delta3 is the major form occurring at S phase replication sites, as well as DNA damage sites. Also observed as a dimeric complex with POLD2 (Pol-delta2 complex). Pol-delta2 is relatively insensitive to the PCNA stimulation (2-5-fold) compared to Pol-delta4 that is stimulated by over 50-fold. Contrary to the other components of Pol-delta4, does not directly interact with PCNA. As POLD1 and POLD4, directly interacts with WRNIP1; this interaction stimulates DNA polymerase delta-mediated DNA synthesis, independently of the presence of PCNA. This stimulation may be due predominantly to an increase of initiation frequency and also to increased processivity. Directly interacts with POLDIP2 and POLDIP3. Directly interacts with KCTD13/PDIP1; in the presence of PCNA, this interaction may stimulate DNA polymerase activity. Component of the tetrameric Pol-zeta complex (Pol-zeta4), which consists of REV3L, MAD2L2, POLD2 and POLD3, with REV3L bearing DNA polymerase catalytic activity. Interacts with KCTD10.

The protein localises to the nucleus. Its function is as follows. Accessory component of both the DNA polymerase delta complex and the DNA polymerase zeta complex. As a component of the trimeric and tetrameric DNA polymerase delta complexes (Pol-delta3 and Pol-delta4, respectively), plays a role in high fidelity genome replication, including in lagging strand synthesis, and repair. Pol-delta3 and Pol-delta4 are characterized by the absence or the presence of POLD4. They exhibit differences in catalytic activity. Most notably, Pol-delta3 shows higher proofreading activity than Pol-delta4. Although both Pol-delta3 and Pol-delta4 process Okazaki fragments in vitro, Pol-delta3 may also be better suited to fulfill this task, exhibiting near-absence of strand displacement activity compared to Pol-delta4 and stalling on encounter with the 5'-blocking oligonucleotides. Pol-delta3 idling process may avoid the formation of a gap, while maintaining a nick that can be readily ligated. Along with DNA polymerase kappa, DNA polymerase delta carries out approximately half of nucleotide excision repair (NER) synthesis following UV irradiation. Under conditions of DNA replication stress, required for the repair of broken replication forks through break-induced replication (BIR). Involved in the translesion synthesis (TLS) of templates carrying O6-methylguanine or abasic sites performed by Pol-delta4, independently of DNA polymerase zeta (REV3L) or eta (POLH). Facilitates abasic site bypass by DNA polymerase delta by promoting extension from the nucleotide inserted opposite the lesion. Also involved in TLS as a component of the DNA polymerase zeta complex. Along with POLD3, dramatically increases the efficiency and processivity of DNA synthesis of the DNA polymerase zeta complex compared to the minimal zeta complex, consisting of only REV3L and REV7. This Mus musculus (Mouse) protein is DNA polymerase delta subunit 2 (Pold2).